Here is a 241-residue protein sequence, read N- to C-terminus: Demethylmenaquinone methyltransferase (241 aa).

S-adenosyl-L-methionine is bound by residues T68, D88, and 114-115 (DA).

It belongs to the class I-like SAM-binding methyltransferase superfamily. MenG/UbiE family.

It carries out the reaction a 2-demethylmenaquinol + S-adenosyl-L-methionine = a menaquinol + S-adenosyl-L-homocysteine + H(+). It functions in the pathway quinol/quinone metabolism; menaquinone biosynthesis; menaquinol from 1,4-dihydroxy-2-naphthoate: step 2/2. Functionally, methyltransferase required for the conversion of demethylmenaquinol (DMKH2) to menaquinol (MKH2). This Deinococcus radiodurans (strain ATCC 13939 / DSM 20539 / JCM 16871 / CCUG 27074 / LMG 4051 / NBRC 15346 / NCIMB 9279 / VKM B-1422 / R1) protein is Demethylmenaquinone methyltransferase.